Consider the following 255-residue polypeptide: FMR1 neighbor protein (255 aa).

The Cytoplasmic segment spans residues 1–68; that stretch reads MSSHRRKAKG…ESLKMRVSKP (68 aa). A helical transmembrane segment spans residues 69-89; sequence FGMLMLSIWILLFVCYYLSYY. The Extracellular portion of the chain corresponds to 90 to 183; that stretch reads LCSGSSYFVL…FAPFRDVPKQ (94 aa). The region spanning 125–184 is the P-type domain; it reads LLNFFFPTTCNLRENQVAKPCNELQDLSESECLRHKCCFSSSGTTSFKCFAPFRDVPKQM. The chain crosses the membrane as a helical span at residues 184-204; it reads MMQMFGLGAISLILVCLPIYC. At 205-255 the chain is on the cytoplasmic side; sequence RSLFWRSEPADDLQRQDNRVVTGLKKQRRKRKRKSEMLQKAARGREEHGDE. A disordered region spans residues 220–255; it reads QDNRVVTGLKKQRRKRKRKSEMLQKAARGREEHGDE. The span at 229–238 shows a compositional bias: basic residues; it reads KKQRRKRKRK.

Testis-specific. Expressed in melanoma, sarcoma, lung, breast, bladder, esophageal and ovarian cancers.

It localises to the membrane. In Homo sapiens (Human), this protein is FMR1 neighbor protein.